Here is a 588-residue protein sequence, read N- to C-terminus: Proteasome-associated ATPase (588 aa).

Basic and acidic residues predominate over residues 1–10 (MAAHDDDMNR). The tract at residues 1–23 (MAAHDDDMNRGIRPGRGSDDPSG) is disordered. The stretch at 47–94 (RILEERIVELQTNLAGVSAQNERLANTLREARDQIVALKEEVDRLAQP) forms a coiled coil. Residue 276–281 (GCGKTL) participates in ATP binding. The docks into pockets in the proteasome alpha-ring stretch occupies residues 587 to 588 (YL).

The protein belongs to the AAA ATPase family. In terms of assembly, homohexamer. Assembles into a hexameric ring structure that caps the 20S proteasome core. Strongly interacts with the prokaryotic ubiquitin-like protein Pup through a hydrophobic interface; the interacting region of ARC lies in its N-terminal coiled-coil domain. There is one Pup binding site per ARC hexamer ring. Upon ATP-binding, the C-terminus of ARC interacts with the alpha-rings of the proteasome core, possibly by binding to the intersubunit pockets.

It functions in the pathway protein degradation; proteasomal Pup-dependent pathway. ATPase which is responsible for recognizing, binding, unfolding and translocation of pupylated proteins into the bacterial 20S proteasome core particle. May be essential for opening the gate of the 20S proteasome via an interaction with its C-terminus, thereby allowing substrate entry and access to the site of proteolysis. Thus, the C-termini of the proteasomal ATPase may function like a 'key in a lock' to induce gate opening and therefore regulate proteolysis. In Streptomyces scabiei (strain 87.22), this protein is Proteasome-associated ATPase.